We begin with the raw amino-acid sequence, 412 residues long: Argininosuccinate synthase (412 aa).

ATP is bound by residues 20-28 and Ala48; that span reads AYSGGLDTS. Residues Tyr100 and Ser105 each contribute to the L-citrulline site. Gly130 lines the ATP pocket. Residues Thr132, Asn136, and Asp137 each coordinate L-aspartate. Asn136 contacts L-citrulline. L-citrulline is bound by residues Arg140, Ser189, Ser198, Glu274, and Tyr286.

Belongs to the argininosuccinate synthase family. Type 1 subfamily. In terms of assembly, homotetramer.

The protein localises to the cytoplasm. It carries out the reaction L-citrulline + L-aspartate + ATP = 2-(N(omega)-L-arginino)succinate + AMP + diphosphate + H(+). The protein operates within amino-acid biosynthesis; L-arginine biosynthesis; L-arginine from L-ornithine and carbamoyl phosphate: step 2/3. This chain is Argininosuccinate synthase, found in Shewanella halifaxensis (strain HAW-EB4).